The sequence spans 236 residues: Small ribosomal subunit protein uS3 (236 aa).

Residues 39–107 (IRLYVLEELK…ETSLNIVEIH (69 aa)) form the KH type-2 domain. Residues 216 to 236 (ERRAAEVDHSGSSSNRRRENA) are disordered.

It belongs to the universal ribosomal protein uS3 family. In terms of assembly, part of the 30S ribosomal subunit. Forms a tight complex with proteins S10 and S14.

In terms of biological role, binds the lower part of the 30S subunit head. Binds mRNA in the 70S ribosome, positioning it for translation. The sequence is that of Small ribosomal subunit protein uS3 from Bartonella henselae (strain ATCC 49882 / DSM 28221 / CCUG 30454 / Houston 1) (Rochalimaea henselae).